The sequence spans 264 residues: S-adenosylmethionine decarboxylase proenzyme (264 aa).

The active-site Schiff-base intermediate with substrate; via pyruvic acid is the S112. S112 carries the pyruvic acid (Ser); by autocatalysis modification. Residue H117 is the Proton acceptor; for processing activity of the active site. C140 (proton donor; for catalytic activity) is an active-site residue.

It belongs to the prokaryotic AdoMetDC family. Type 2 subfamily. As to quaternary structure, heterooctamer of four alpha and four beta chains arranged as a tetramer of alpha/beta heterodimers. Pyruvate is required as a cofactor. Post-translationally, is synthesized initially as an inactive proenzyme. Formation of the active enzyme involves a self-maturation process in which the active site pyruvoyl group is generated from an internal serine residue via an autocatalytic post-translational modification. Two non-identical subunits are generated from the proenzyme in this reaction, and the pyruvate is formed at the N-terminus of the alpha chain, which is derived from the carboxyl end of the proenzyme. The post-translation cleavage follows an unusual pathway, termed non-hydrolytic serinolysis, in which the side chain hydroxyl group of the serine supplies its oxygen atom to form the C-terminus of the beta chain, while the remainder of the serine residue undergoes an oxidative deamination to produce ammonia and the pyruvoyl group blocking the N-terminus of the alpha chain.

It catalyses the reaction S-adenosyl-L-methionine + H(+) = S-adenosyl 3-(methylsulfanyl)propylamine + CO2. It functions in the pathway amine and polyamine biosynthesis; S-adenosylmethioninamine biosynthesis; S-adenosylmethioninamine from S-adenosyl-L-methionine: step 1/1. Functionally, catalyzes the decarboxylation of S-adenosylmethionine to S-adenosylmethioninamine (dcAdoMet), the propylamine donor required for the synthesis of the polyamines spermine and spermidine from the diamine putrescine. The chain is S-adenosylmethionine decarboxylase proenzyme from Salmonella dublin (strain CT_02021853).